Consider the following 475-residue polypeptide: Aspartyl/glutamyl-tRNA(Asn/Gln) amidotransferase subunit B (475 aa).

It belongs to the GatB/GatE family. GatB subfamily. Heterotrimer of A, B and C subunits.

It catalyses the reaction L-glutamyl-tRNA(Gln) + L-glutamine + ATP + H2O = L-glutaminyl-tRNA(Gln) + L-glutamate + ADP + phosphate + H(+). The enzyme catalyses L-aspartyl-tRNA(Asn) + L-glutamine + ATP + H2O = L-asparaginyl-tRNA(Asn) + L-glutamate + ADP + phosphate + 2 H(+). Its function is as follows. Allows the formation of correctly charged Asn-tRNA(Asn) or Gln-tRNA(Gln) through the transamidation of misacylated Asp-tRNA(Asn) or Glu-tRNA(Gln) in organisms which lack either or both of asparaginyl-tRNA or glutaminyl-tRNA synthetases. The reaction takes place in the presence of glutamine and ATP through an activated phospho-Asp-tRNA(Asn) or phospho-Glu-tRNA(Gln). This Staphylococcus aureus (strain MRSA252) protein is Aspartyl/glutamyl-tRNA(Asn/Gln) amidotransferase subunit B.